A 235-amino-acid chain; its full sequence is Endonuclease V (235 aa).

Residues Asp45 and Asp115 each coordinate Mg(2+).

The protein belongs to the endonuclease V family. The cofactor is Mg(2+).

The protein resides in the cytoplasm. It carries out the reaction Endonucleolytic cleavage at apurinic or apyrimidinic sites to products with a 5'-phosphate.. Functionally, DNA repair enzyme involved in the repair of deaminated bases. Selectively cleaves double-stranded DNA at the second phosphodiester bond 3' to a deoxyinosine leaving behind the intact lesion on the nicked DNA. The sequence is that of Endonuclease V from Bacillus thuringiensis subsp. konkukian (strain 97-27).